The sequence spans 328 residues: Glyoxylate reductase/hydroxypyruvate reductase (328 aa).

At S36 the chain carries Phosphoserine. Residue 83-84 (VG) participates in substrate binding. Residues 162 to 164 (GRI), 185 to 188 (RQPR), S217, and I243 each bind NADP(+). Substrate contacts are provided by R245 and D269. Position 272 is a phosphoserine (S272). H293 functions as the Proton donor in the catalytic mechanism. 293–296 (HIGS) is a binding site for substrate. Position 295 (G295) interacts with NADP(+). Position 298 is a phosphothreonine (T298).

It belongs to the D-isomer specific 2-hydroxyacid dehydrogenase family. Homodimer. In terms of tissue distribution, ubiquitous. Most abundantly expressed in the liver.

The enzyme catalyses glycolate + NADP(+) = glyoxylate + NADPH + H(+). It carries out the reaction (R)-glycerate + NAD(+) = 3-hydroxypyruvate + NADH + H(+). The catalysed reaction is (R)-glycerate + NADP(+) = 3-hydroxypyruvate + NADPH + H(+). Enzyme with hydroxy-pyruvate reductase, glyoxylate reductase and D-glycerate dehydrogenase enzymatic activities. Reduces hydroxypyruvate to D-glycerate, glyoxylate to glycolate, oxidizes D-glycerate to hydroxypyruvate. The chain is Glyoxylate reductase/hydroxypyruvate reductase (GRHPR) from Homo sapiens (Human).